The sequence spans 427 residues: Peptidase B (427 aa).

Lysine 195 and aspartate 200 together coordinate Mn(2+). The active site involves lysine 207. 3 residues coordinate Mn(2+): aspartate 218, aspartate 277, and glutamate 279. Residue arginine 281 is part of the active site.

It belongs to the peptidase M17 family. Homohexamer. It depends on Mn(2+) as a cofactor.

The protein localises to the cytoplasm. It catalyses the reaction Release of an N-terminal amino acid, Xaa, from a peptide or arylamide. Xaa is preferably Glu or Asp but may be other amino acids, including Leu, Met, His, Cys and Gln.. In terms of biological role, probably plays an important role in intracellular peptide degradation. This Escherichia coli (strain ATCC 8739 / DSM 1576 / NBRC 3972 / NCIMB 8545 / WDCM 00012 / Crooks) protein is Peptidase B.